The sequence spans 88 residues: Small ribosomal subunit protein uS17 (88 aa).

It belongs to the universal ribosomal protein uS17 family. In terms of assembly, part of the 30S ribosomal subunit.

In terms of biological role, one of the primary rRNA binding proteins, it binds specifically to the 5'-end of 16S ribosomal RNA. The sequence is that of Small ribosomal subunit protein uS17 from Prochlorococcus marinus (strain MIT 9301).